Here is a 445-residue protein sequence, read N- to C-terminus: Tubulin alpha-3 chain (445 aa).

GTP is bound by residues Gln11, Glu72, Ser141, Gly145, Thr146, Thr180, Asn207, and Asn229. Glu72 serves as a coordination point for Mg(2+). The active site involves Glu255.

It belongs to the tubulin family. Dimer of alpha and beta chains. A typical microtubule is a hollow water-filled tube with an outer diameter of 25 nm and an inner diameter of 15 nM. Alpha-beta heterodimers associate head-to-tail to form protofilaments running lengthwise along the microtubule wall with the beta-tubulin subunit facing the microtubule plus end conferring a structural polarity. Microtubules usually have 13 protofilaments but different protofilament numbers can be found in some organisms and specialized cells. Interacts with NUM1. Mg(2+) is required as a cofactor.

Its subcellular location is the cytoplasm. It is found in the cytoskeleton. It carries out the reaction GTP + H2O = GDP + phosphate + H(+). In terms of biological role, tubulin is the major constituent of microtubules, a cylinder consisting of laterally associated linear protofilaments composed of alpha- and beta-tubulin heterodimers. Microtubules grow by the addition of GTP-tubulin dimers to the microtubule end, where a stabilizing cap forms. Below the cap, tubulin dimers are in GDP-bound state, owing to GTPase activity of alpha-tubulin. In Saccharomyces cerevisiae (strain ATCC 204508 / S288c) (Baker's yeast), this protein is Tubulin alpha-3 chain (TUB3).